Consider the following 1342-residue polypeptide: DNA-directed RNA polymerase subunit beta (1342 aa).

Belongs to the RNA polymerase beta chain family. As to quaternary structure, the RNAP catalytic core consists of 2 alpha, 1 beta, 1 beta' and 1 omega subunit. When a sigma factor is associated with the core the holoenzyme is formed, which can initiate transcription.

It carries out the reaction RNA(n) + a ribonucleoside 5'-triphosphate = RNA(n+1) + diphosphate. Its function is as follows. DNA-dependent RNA polymerase catalyzes the transcription of DNA into RNA using the four ribonucleoside triphosphates as substrates. The chain is DNA-directed RNA polymerase subunit beta from Actinobacillus pleuropneumoniae serotype 3 (strain JL03).